The sequence spans 276 residues: Diaminopimelate epimerase (276 aa).

Substrate is bound by residues asparagine 13, glutamine 46, and asparagine 66. Residue cysteine 75 is the Proton donor of the active site. Substrate contacts are provided by residues 76-77 (GN), asparagine 159, asparagine 192, and 210-211 (ER). The Proton acceptor role is filled by cysteine 219. 220–221 (GT) contacts substrate.

This sequence belongs to the diaminopimelate epimerase family. In terms of assembly, homodimer.

The protein localises to the cytoplasm. The enzyme catalyses (2S,6S)-2,6-diaminopimelate = meso-2,6-diaminopimelate. The protein operates within amino-acid biosynthesis; L-lysine biosynthesis via DAP pathway; DL-2,6-diaminopimelate from LL-2,6-diaminopimelate: step 1/1. In terms of biological role, catalyzes the stereoinversion of LL-2,6-diaminopimelate (L,L-DAP) to meso-diaminopimelate (meso-DAP), a precursor of L-lysine and an essential component of the bacterial peptidoglycan. The sequence is that of Diaminopimelate epimerase from Pseudomonas entomophila (strain L48).